Here is a 109-residue protein sequence, read N- to C-terminus: Resistin (109 aa).

The first 18 residues, 1-18, serve as a signal peptide directing secretion; the sequence is MKALSFLFIPVLGLLVCG. 5 disulfide bridges follow: Cys51–Cys104, Cys63–Cys103, Cys72–Cys89, Cys74–Cys91, and Cys78–Cys93.

Belongs to the resistin/FIZZ family. As to quaternary structure, homodimer; disulfide-linked.

The protein localises to the secreted. Functionally, hormone that seems to suppress insulin ability to stimulate glucose uptake into adipose cells. Potentially links obesity to diabetes. The polypeptide is Resistin (RETN) (Bos taurus (Bovine)).